The following is a 558-amino-acid chain: Mitochondrial nucleoid-associated protein 1 (558 aa).

Topologically, residues 1 to 527 (MGAAEPRMEV…VQCNTTIKKS (527 aa)) are extracellular. Disordered regions lie at residues 29–88 (KMRG…SWTA), 130–205 (LQRV…KLGT), and 222–269 (LSDR…KTQK). Positions 36 to 45 (SADQNVSQSK) are enriched in polar residues. Positions 51 to 81 (QKEKSPTRDLTRAKEKELEVDRPKRAVKAET) are enriched in basic and acidic residues. Composition is skewed to polar residues over residues 131-144 (QRVT…SDAT) and 187-197 (SSTQPHANPAT). The chain crosses the membrane as a helical span at residues 528-548 (GVGGLTMLFAGYFILCCNWSF). At 549-558 (KHLKLQHWRK) the chain is on the cytoplasmic side.

The protein localises to the mitochondrion inner membrane. Its subcellular location is the mitochondrion matrix. It is found in the mitochondrion nucleoid. Its function is as follows. Critical regulator of mitochondrial DNA (mtDNA) abundance. Binds dsDNA throughout the mitochondrial genome without sequence specificity and controls mtDNA copy number by promoting its replication. Also plays important roles in mitochondrial metabolism and cell proliferation. The polypeptide is Mitochondrial nucleoid-associated protein 1 (Mus musculus (Mouse)).